Here is a 223-residue protein sequence, read N- to C-terminus: ATP-dependent dethiobiotin synthetase BioD (223 aa).

Thr-16 is a binding site for Mg(2+). Lys-37 is a catalytic residue. Ser-41 is a binding site for substrate. Mg(2+) is bound by residues Asp-50 and Glu-111. Residues Asp-50, 111 to 114 (EGAG), 171 to 172 (NQ), 201 to 203 (AHV), and Glu-208 each bind ATP.

The protein belongs to the dethiobiotin synthetase family. In terms of assembly, homodimer. Mg(2+) is required as a cofactor.

Its subcellular location is the cytoplasm. The enzyme catalyses (7R,8S)-7,8-diammoniononanoate + CO2 + ATP = (4R,5S)-dethiobiotin + ADP + phosphate + 3 H(+). The protein operates within cofactor biosynthesis; biotin biosynthesis; biotin from 7,8-diaminononanoate: step 1/2. Catalyzes a mechanistically unusual reaction, the ATP-dependent insertion of CO2 between the N7 and N8 nitrogen atoms of 7,8-diaminopelargonic acid (DAPA, also called 7,8-diammoniononanoate) to form a ureido ring. This Anaeromyxobacter sp. (strain Fw109-5) protein is ATP-dependent dethiobiotin synthetase BioD.